The following is a 561-amino-acid chain: Glutamate--tRNA ligase (561 aa).

Positions 107–117 (PNPSGPLHLGH) match the 'HIGH' region motif.

It belongs to the class-I aminoacyl-tRNA synthetase family. Glutamate--tRNA ligase type 2 subfamily.

The protein localises to the cytoplasm. The enzyme catalyses tRNA(Glu) + L-glutamate + ATP = L-glutamyl-tRNA(Glu) + AMP + diphosphate. Functionally, catalyzes the attachment of glutamate to tRNA(Glu) in a two-step reaction: glutamate is first activated by ATP to form Glu-AMP and then transferred to the acceptor end of tRNA(Glu). The protein is Glutamate--tRNA ligase of Methanoculleus marisnigri (strain ATCC 35101 / DSM 1498 / JR1).